The sequence spans 1726 residues: Transcription elongation factor SPT6 (1726 aa).

Acidic residues-rich tracts occupy residues 1-14 (MSDF…ESEE), 32-49 (EEED…DDQD), and 59-80 (NDDD…DSED). Residues 1-197 (MSDFVESEAE…DDGQPLKKPK (197 aa)) form a disordered region. Ser-2 carries the post-translational modification N-acetylserine. Positions 2–485 (SDFVESEAEE…PKMQNAAKAS (484 aa)) are interaction with IWS1. Residues 2 to 916 (SDFVESEAEE…PPVLRQAVSL (915 aa)) are interaction with PAAF1. Positions 3 to 51 (DFVESEAEESEEEYNHEGEVVPRVTKKFVEEEDDDEEEEEENLDDQDER) form a coiled coil. Ser-7 and Ser-12 each carry phosphoserine. A phosphoserine mark is found at Ser-73, Ser-78, and Ser-91. Positions 95–105 (RLEDDDFDLIE) are enriched in acidic residues. Residues 111–122 (KVKRGQKYRRVK) are compositionally biased toward basic residues. Ser-125 is subject to Phosphoserine. Acidic residues-rich tracts occupy residues 126-136 (DDDEDDEEEYG), 150-160 (FQDEEGEEGQE), and 169-190 (PDEE…DDDG). A Phosphoserine modification is found at Ser-267. The interaction with KDM6A stretch occupies residues 317–1300 (ADWIYRNAFA…NEWKLPKDTY (984 aa)). The interval 489 to 520 (LKRIKEDGDEEGEGEEAEDEEQRGPELKQASR) is disordered. The segment covering 495 to 509 (DGDEEGEGEEAEDEE) has biased composition (acidic residues). The span at 510-520 (QRGPELKQASR) shows a compositional bias: basic and acidic residues. At Lys-743 the chain carries N6-acetyllysine. Positions 1213–1282 (WNHFDSGSCP…EKFSADLTCR (70 aa)) constitute an S1 motif domain. An SH2 domain is found at 1325–1431 (YIKRVIAHPS…FARDLLNHKY (107 aa)). The residue at position 1515 (Tyr-1515) is a Phosphotyrosine. Thr-1523 is subject to Phosphothreonine. A Phosphoserine modification is found at Ser-1526. Phosphothreonine occurs at positions 1530 and 1532. Ser-1535 carries the post-translational modification Phosphoserine. Phosphothreonine is present on Thr-1539. Positions 1633 to 1726 (PQYHQLQAST…ATPLLDEMDR (94 aa)) are interaction with histone H2B and H3. The interval 1636–1726 (HQLQASTTPQ…ATPLLDEMDR (91 aa)) is disordered. Low complexity predominate over residues 1639–1664 (QASTTPQSTQAQPQPSSSSRQRQQQP). The residue at position 1676 (Lys-1676) is an N6-acetyllysine. A Phosphothreonine modification is found at Thr-1697. Phosphoserine occurs at positions 1701 and 1703. A phosphothreonine mark is found at Thr-1709 and Thr-1718.

The protein belongs to the SPT6 family. Interacts with RNA polymerase II and the DRB sensitivity-inducing factor complex (DSIF complex), which is composed of SUPT5H and SUPT4H1 or SUPT4H2. Interacts with PAAF1. Interacts with histone H2B and H3. Interacts (via SH2 domain) with POLR2A phosphorylated at 'Ser-2'. Interacts (via SH2 domain) with SETD1A. Interacts with IWS1, KDM6A and AICDA. Interacts with WDR43. Dephosphorylated at Ser-1530 by the PNUTS-PP1 complex during RNA polymerase II transcription pause-release. Ubiquitously expressed.

The protein resides in the nucleus. Functionally, histone H3-H4 chaperone that plays a key role in the regulation of transcription elongation and mRNA processing. Enhances the transcription elongation by RNA polymerase II (RNAPII) and is also required for the efficient activation of transcriptional elongation by the HIV-1 nuclear transcriptional activator, Tat. Besides chaperoning histones in transcription, acts to transport and splice mRNA by forming a complex with IWS1 and the C-terminal domain (CTD) of the RNAPII subunit RPB1 (POLR2A). The SUPT6H:IWS1:CTD complex recruits mRNA export factors (ALYREF/THOC4, EXOSC10) as well as histone modifying enzymes (such as SETD2), to ensure proper mRNA splicing, efficient mRNA export and elongation-coupled H3K36 methylation, a signature chromatin mark of active transcription. SUPT6H via its association with SETD1A, regulates both class-switch recombination and somatic hypermutation through formation of H3K4me3 epigenetic marks on activation-induced cytidine deaminase (AICDA) target loci. Promotes the activation of the myogenic gene program by entailing erasure of the repressive H3K27me3 epigenetic mark through stabilization of the chromatin interaction of the H3K27 demethylase KDM6A. The chain is Transcription elongation factor SPT6 (Supt6h) from Mus musculus (Mouse).